The primary structure comprises 417 residues: Serine--tRNA ligase (417 aa).

226–228 (TSE) is an L-serine binding site. Residues 257–259 (RRE) and V273 each bind ATP. Position 280 (E280) interacts with L-serine. 344–347 (ELTS) lines the ATP pocket. Position 379 (T379) interacts with L-serine.

This sequence belongs to the class-II aminoacyl-tRNA synthetase family. Type-1 seryl-tRNA synthetase subfamily. In terms of assembly, homodimer. The tRNA molecule binds across the dimer.

It is found in the cytoplasm. It catalyses the reaction tRNA(Ser) + L-serine + ATP = L-seryl-tRNA(Ser) + AMP + diphosphate + H(+). The catalysed reaction is tRNA(Sec) + L-serine + ATP = L-seryl-tRNA(Sec) + AMP + diphosphate + H(+). Its pathway is aminoacyl-tRNA biosynthesis; selenocysteinyl-tRNA(Sec) biosynthesis; L-seryl-tRNA(Sec) from L-serine and tRNA(Sec): step 1/1. Its function is as follows. Catalyzes the attachment of serine to tRNA(Ser). Is also able to aminoacylate tRNA(Sec) with serine, to form the misacylated tRNA L-seryl-tRNA(Sec), which will be further converted into selenocysteinyl-tRNA(Sec). This chain is Serine--tRNA ligase, found in Mycobacterium sp. (strain KMS).